Reading from the N-terminus, the 163-residue chain is Nucleotide-binding protein HAPS_2236 (163 aa).

This sequence belongs to the YajQ family.

Functionally, nucleotide-binding protein. This Glaesserella parasuis serovar 5 (strain SH0165) (Haemophilus parasuis) protein is Nucleotide-binding protein HAPS_2236.